A 246-amino-acid chain; its full sequence is Flagellar brake protein YcgR (246 aa).

One can recognise a PilZ domain in the interval 128-232 (KRAHFRAYVG…QAERQLLQAI (105 aa)).

Belongs to the YcgR family. As to quaternary structure, monomer. Interacts with the flagellar basal bodies.

It is found in the bacterial flagellum basal body. Functionally, acts as a flagellar brake, regulating swimming and swarming in a bis-(3'-5') cyclic diguanylic acid (c-di-GMP)-dependent manner. Binds 1 c-di-GMP dimer per subunit. Increasing levels of c-di-GMP lead to decreased motility. The sequence is that of Flagellar brake protein YcgR from Thioalkalivibrio sulfidiphilus (strain HL-EbGR7).